Consider the following 152-residue polypeptide: Large ribosomal subunit protein bL9 (152 aa).

This sequence belongs to the bacterial ribosomal protein bL9 family.

Binds to the 23S rRNA. This Mycobacterium avium (strain 104) protein is Large ribosomal subunit protein bL9.